The sequence spans 590 residues: Rho GTPase-activating protein 36 (590 aa).

The region spanning 214 to 414 is the Rho-GAP domain; it reads MSLNPIAQQI…AMIDNWDILF (201 aa). Residues 526 to 590 form a disordered region; it reads IPNNEDTDSD…KGKFATRFFP (65 aa).

As to quaternary structure, may interacts (via the Rho-GAP domain) with the active form of RAC1.

GTPase activator for the Rho-type GTPases by converting them to an inactive GDP-bound state. The protein is Rho GTPase-activating protein 36 (Arhgap36) of Mus musculus (Mouse).